The sequence spans 87 residues: Small ribosomal subunit protein bS16 (87 aa).

The protein belongs to the bacterial ribosomal protein bS16 family.

The chain is Small ribosomal subunit protein bS16 from Fusobacterium nucleatum subsp. nucleatum (strain ATCC 25586 / DSM 15643 / BCRC 10681 / CIP 101130 / JCM 8532 / KCTC 2640 / LMG 13131 / VPI 4355).